The sequence spans 187 residues: Elongation factor P 1 (187 aa).

This sequence belongs to the elongation factor P family.

It is found in the cytoplasm. The protein operates within protein biosynthesis; polypeptide chain elongation. Functionally, involved in peptide bond synthesis. Stimulates efficient translation and peptide-bond synthesis on native or reconstituted 70S ribosomes in vitro. Probably functions indirectly by altering the affinity of the ribosome for aminoacyl-tRNA, thus increasing their reactivity as acceptors for peptidyl transferase. This is Elongation factor P 1 from Geobacter sulfurreducens (strain ATCC 51573 / DSM 12127 / PCA).